A 382-amino-acid polypeptide reads, in one-letter code: Queuine tRNA-ribosyltransferase (382 aa).

Asp-93 acts as the Proton acceptor in catalysis. Substrate is bound by residues 93 to 97 (DSGGF), Asp-147, Gln-191, and Gly-218. The tract at residues 249–255 (GVGKPED) is RNA binding. The active-site Nucleophile is the Asp-268. An RNA binding; important for wobble base 34 recognition region spans residues 273 to 277 (TRNAR). Residues Cys-306, Cys-308, Cys-311, and His-337 each coordinate Zn(2+).

The protein belongs to the queuine tRNA-ribosyltransferase family. In terms of assembly, homodimer. Within each dimer, one monomer is responsible for RNA recognition and catalysis, while the other monomer binds to the replacement base PreQ1. Requires Zn(2+) as cofactor.

It catalyses the reaction 7-aminomethyl-7-carbaguanine + guanosine(34) in tRNA = 7-aminomethyl-7-carbaguanosine(34) in tRNA + guanine. Its pathway is tRNA modification; tRNA-queuosine biosynthesis. Functionally, catalyzes the base-exchange of a guanine (G) residue with the queuine precursor 7-aminomethyl-7-deazaguanine (PreQ1) at position 34 (anticodon wobble position) in tRNAs with GU(N) anticodons (tRNA-Asp, -Asn, -His and -Tyr). Catalysis occurs through a double-displacement mechanism. The nucleophile active site attacks the C1' of nucleotide 34 to detach the guanine base from the RNA, forming a covalent enzyme-RNA intermediate. The proton acceptor active site deprotonates the incoming PreQ1, allowing a nucleophilic attack on the C1' of the ribose to form the product. After dissociation, two additional enzymatic reactions on the tRNA convert PreQ1 to queuine (Q), resulting in the hypermodified nucleoside queuosine (7-(((4,5-cis-dihydroxy-2-cyclopenten-1-yl)amino)methyl)-7-deazaguanosine). The polypeptide is Queuine tRNA-ribosyltransferase (Haemophilus influenzae (strain 86-028NP)).